The following is a 429-amino-acid chain: Glutamate-1-semialdehyde 2,1-aminomutase (429 aa).

Lysine 264 carries the N6-(pyridoxal phosphate)lysine modification.

The protein belongs to the class-III pyridoxal-phosphate-dependent aminotransferase family. HemL subfamily. As to quaternary structure, homodimer. Requires pyridoxal 5'-phosphate as cofactor.

It localises to the cytoplasm. The enzyme catalyses (S)-4-amino-5-oxopentanoate = 5-aminolevulinate. It functions in the pathway porphyrin-containing compound metabolism; protoporphyrin-IX biosynthesis; 5-aminolevulinate from L-glutamyl-tRNA(Glu): step 2/2. This Campylobacter curvus (strain 525.92) protein is Glutamate-1-semialdehyde 2,1-aminomutase.